The sequence spans 172 residues: Large ribosomal subunit protein uL10 (172 aa).

Belongs to the universal ribosomal protein uL10 family. In terms of assembly, part of the ribosomal stalk of the 50S ribosomal subunit. The N-terminus interacts with L11 and the large rRNA to form the base of the stalk. The C-terminus forms an elongated spine to which L12 dimers bind in a sequential fashion forming a multimeric L10(L12)X complex.

Forms part of the ribosomal stalk, playing a central role in the interaction of the ribosome with GTP-bound translation factors. This is Large ribosomal subunit protein uL10 from Xanthobacter autotrophicus (strain ATCC BAA-1158 / Py2).